Reading from the N-terminus, the 313-residue chain is UPF0761 membrane protein VV1_0885 (313 aa).

A run of 6 helical transmembrane segments spans residues 41-61, 104-124, 139-159, 185-205, 215-235, and 249-269; these read YLAY…LSIL, MTAV…SNID, AVFS…LVGA, LLRW…YLLV, AVVG…GFAA, and ALAA…IVLI. Residues 294 to 313 form a disordered region; the sequence is PNNDTELEKDTQRDRFDSES. The span at 299-313 shows a compositional bias: basic and acidic residues; it reads ELEKDTQRDRFDSES.

It belongs to the UPF0761 family.

Its subcellular location is the cell inner membrane. In Vibrio vulnificus (strain CMCP6), this protein is UPF0761 membrane protein VV1_0885.